Here is a 677-residue protein sequence, read N- to C-terminus: Methionine--tRNA ligase (677 aa).

The short motif at 14–24 (PYANGSIHLGH) is the 'HIGH' region element. Residues Cys145, Cys148, Cys158, and Cys161 each contribute to the Zn(2+) site. The short motif at 331-335 (KMSKS) is the 'KMSKS' region element. Lys334 is a binding site for ATP. The 103-residue stretch at 575–677 (AFAAVDLRIA…SGAKPGQRVK (103 aa)) folds into the tRNA-binding domain.

Belongs to the class-I aminoacyl-tRNA synthetase family. MetG type 1 subfamily. Homodimer. The cofactor is Zn(2+).

It localises to the cytoplasm. The enzyme catalyses tRNA(Met) + L-methionine + ATP = L-methionyl-tRNA(Met) + AMP + diphosphate. Its function is as follows. Is required not only for elongation of protein synthesis but also for the initiation of all mRNA translation through initiator tRNA(fMet) aminoacylation. The polypeptide is Methionine--tRNA ligase (Pseudomonas aeruginosa (strain LESB58)).